The primary structure comprises 984 residues: Ephrin type-B receptor 1 (984 aa).

The region spanning 1–182 (ETLMDTRTAT…FFKKCPSVVQ (182 aa)) is the Eph LBD domain. At 1 to 541 (ETLMDTRTAT…KSELREQLPL (541 aa)) the chain is on the extracellular side. 2 consecutive Fibronectin type-III domains span residues 303–413 (VPSG…TNQA) and 414–528 (APST…TLTD). N-linked (GlcNAc...) asparagine glycosylation is found at asparagine 315, asparagine 407, and asparagine 480. Residues 542–562 (IAGSAAAGVVFIVSLVAISIV) form a helical membrane-spanning segment. Over 563 to 984 (CSRKRAYSKE…QMSQSPTSMA (422 aa)) the chain is Cytoplasmic. The Protein kinase domain maps to 619-882 (VKIEEVIGAG…EIVNTLDKMI (264 aa)). ATP contacts are provided by residues 625 to 633 (IGAGEFGEV) and lysine 651. The Proton acceptor role is filled by aspartate 744. The SAM domain maps to 911 to 975 (TAFTSVEDWL…LNSIQSMRVQ (65 aa)). A PDZ-binding motif is present at residues 982–984 (SMA).

This sequence belongs to the protein kinase superfamily. Tyr protein kinase family. Ephrin receptor subfamily. Heterotetramer upon binding of the ligand. The heterotetramer is composed of an ephrin dimer and a receptor dimer. Oligomerization is probably required to induce biological responses. In terms of processing, phosphorylated. Autophosphorylation is stimulated by ligands. Expressed at high levels in the 10-day embryo, and in adult brain, lung, heart and skeletal muscle. Low levels of expression detected in all other adult tissues tested.

It is found in the cell membrane. The protein localises to the early endosome membrane. It localises to the cell projection. Its subcellular location is the dendrite. The enzyme catalyses L-tyrosyl-[protein] + ATP = O-phospho-L-tyrosyl-[protein] + ADP + H(+). Receptor tyrosine kinase which binds promiscuously transmembrane ephrin-B family ligands residing on adjacent cells, leading to contact-dependent bidirectional signaling into neighboring cells. The signaling pathway downstream of the receptor is referred to as forward signaling while the signaling pathway downstream of the ephrin ligand is referred to as reverse signaling. May play a role in axon guidance during nervous system development. May also play an important redundant role with other ephrin-B receptors in development and maturation of dendritic spines and synapse formation. More generally, may play a role in targeted cell migration and adhesion. Upon activation by ephrin-B ligands activates the MAPK/ERK and the JNK signaling cascades to regulate cell migration and adhesion respectively. The polypeptide is Ephrin type-B receptor 1 (EPHB1) (Gallus gallus (Chicken)).